The primary structure comprises 306 residues: Probable thioesterase atnL (306 aa).

The protein belongs to the lcsJ thioesterase family.

Functionally, part of the gene cluster that mediates the biosynthesis of aspercryptins, linear lipopeptides built from six amino acids including 2 highly unusual and nonproteogenic amino acids, 2-amino-octanoic acid (2aoa) and 2-amino-dodecanol (2adol). The core structure of aspercryptins is as follows: Ser/Ala-Thr-Ile/Val-2aoa-Asn-2adol. The first step of aspercryptin biosynthesis is the generation of the fatty acid precursors, octanoic and dodecanoic acids, by the FAS subunits atnF and atnM. The fatty acid precursors are likely transformed into the corresponding alpha-amino fatty acids in three steps. First, they are hydroxylated by the cytochrome P450 monooxygenase atnE, then oxidized to the corresponding alpha-keto acids by the NAD(P)-dependent oxidoreductase atnD, and finally converted to the alpha-amino fatty acids by the PLP-dependent aminotransferases atnH or atnJ. the alpha-amino fatty acids, 2-amino-octanoic and 2-amino-dodecanoic acids, are recognized, activated, and covalently tethered to the NRPS atnA by its fourth and sixth adenylation domains. The second module of atnA is the Thr module and contains an epimerase (E) domain responsible for the epimerization of Thr to D-allo-Thr. Additionally, despite atnA having only one epimerase domain, the first amino acid of aspercryptin A1 is D-Ser, suggesting that serine is either loaded directly as D-Ser on the first module or that the epimerase domain in the threonine module epimerizes both L-Ser and L-Thr. After condensation of the hexapeptide of aspercryptin, the C-terminal reductase (TE) domain might be involved in the reductive release and production of the aldehyde hexapeptide. Further reduction would generate aspercryptins. The variety of aspercryptins produced reflects the flexibility of the atnA NRPS, allowing incorporation of alanine instead of serine, valine for isoleucine, and a C10 fatty amino alcohol instead of the C12 version. AtnB seems to be involved in the selectivity for Ile versus Val by the third module. Moreover, type B, C and D aspercryptins have an additional N-terminal cichorine, acetyl and propionyl group respectively. The chain is Probable thioesterase atnL from Emericella nidulans (strain FGSC A4 / ATCC 38163 / CBS 112.46 / NRRL 194 / M139) (Aspergillus nidulans).